The primary structure comprises 327 residues: MQKVFIAPTHYKRIDEFLAKELQISKNQVLNLIKEGLVFCQKKEVKKGGLALKEGDAITLLTPKIVPKPLKKELDLEIEVIFEDEDLLVLNKPPNLVVHKAPSVKEPTLVDWLKSQNYELSNLGLKERYGIVHRLDKDTSGGIVIAKNNFTHVCLSEQLKTKMMGRYYIALLSTPLKEEKMSVECYLTRNPNNRLKMIALKAAKKEKSRYSKSEFTSLLTSQNGMDLIGAKLFTGRTHQIRAHLEYLNRHIIGDNLYGLNGVLSKEEIRIMLHAYLIEFKHPRSEQKLRFKVPLLKDMLEYLKKVFDKENLDEVLDEEKILHAFIAK.

The 68-residue stretch at 12 to 79 (KRIDEFLAKE…LKKELDLEIE (68 aa)) folds into the S4 RNA-binding domain. Residue Asp136 is part of the active site.

The protein belongs to the pseudouridine synthase RluA family.

The catalysed reaction is a uridine in RNA = a pseudouridine in RNA. This is an uncharacterized protein from Helicobacter pylori (strain J99 / ATCC 700824) (Campylobacter pylori J99).